The following is a 367-amino-acid chain: Germination protease (367 aa).

A propeptide spanning residues 1–15 (MKEPLDLSKYSVRTD) is cleaved from the precursor.

It belongs to the peptidase A25 family. As to quaternary structure, homotetramer. Post-translationally, autoproteolytically processed. The inactive tetrameric zymogen termed p46 autoprocesses to a smaller form termed p41, which is active only during spore germination.

The enzyme catalyses Endopeptidase action with P4 Glu or Asp, P1 preferably Glu &gt; Asp, P1' hydrophobic and P2' Ala.. Initiates the rapid degradation of small, acid-soluble proteins during spore germination. The sequence is that of Germination protease from Bacillus cereus (strain AH187).